Reading from the N-terminus, the 910-residue chain is Protein translocase subunit SecA (910 aa).

ATP-binding positions include Gln89, 107 to 111 (GEGKT), and Asp502. 4 residues coordinate Zn(2+): Cys894, Cys896, Cys905, and His906.

Belongs to the SecA family. As to quaternary structure, monomer and homodimer. Part of the essential Sec protein translocation apparatus which comprises SecA, SecYEG and auxiliary proteins SecDF-YajC and YidC. The cofactor is Zn(2+).

It localises to the cell inner membrane. The protein localises to the cytoplasm. The catalysed reaction is ATP + H2O + cellular proteinSide 1 = ADP + phosphate + cellular proteinSide 2.. In terms of biological role, part of the Sec protein translocase complex. Interacts with the SecYEG preprotein conducting channel. Has a central role in coupling the hydrolysis of ATP to the transfer of proteins into and across the cell membrane, serving both as a receptor for the preprotein-SecB complex and as an ATP-driven molecular motor driving the stepwise translocation of polypeptide chains across the membrane. The chain is Protein translocase subunit SecA from Chelativorans sp. (strain BNC1).